Consider the following 320-residue polypeptide: Cytochrome c biogenesis protein CcsA (320 aa).

8 helical membrane-spanning segments follow: residues 13 to 33, 46 to 66, 73 to 93, 102 to 122, 147 to 167, 226 to 246, 259 to 274, and 289 to 309; these read ISFS…FLLV, GMIV…IYSG, LYES…VSYL, LSAI…SGLL, MVLG…LLVI, IISL…VWAN, ETWA…IYFH, and VASM…LLGI.

Belongs to the CcmF/CycK/Ccl1/NrfE/CcsA family. As to quaternary structure, may interact with Ccs1.

It is found in the plastid. It localises to the chloroplast thylakoid membrane. In terms of biological role, required during biogenesis of c-type cytochromes (cytochrome c6 and cytochrome f) at the step of heme attachment. This Gossypium hirsutum (Upland cotton) protein is Cytochrome c biogenesis protein CcsA.